The following is a 119-amino-acid chain: Large ribosomal subunit protein uL18 (119 aa).

The protein belongs to the universal ribosomal protein uL18 family. As to quaternary structure, part of the 50S ribosomal subunit; part of the 5S rRNA/L5/L18/L25 subcomplex. Contacts the 5S and 23S rRNAs.

This is one of the proteins that bind and probably mediate the attachment of the 5S RNA into the large ribosomal subunit, where it forms part of the central protuberance. This Solibacter usitatus (strain Ellin6076) protein is Large ribosomal subunit protein uL18.